The chain runs to 953 residues: Isoleucine--tRNA ligase (953 aa).

A 'HIGH' region motif is present at residues 58-68; that stretch reads PYANGNIHLGH. Residue E565 participates in L-isoleucyl-5'-AMP binding. Residues 606–610 carry the 'KMSKS' region motif; sequence KMSKS. ATP is bound at residue K609. Residues C916, C919, C936, and C939 each contribute to the Zn(2+) site.

It belongs to the class-I aminoacyl-tRNA synthetase family. IleS type 1 subfamily. In terms of assembly, monomer. The cofactor is Zn(2+).

It localises to the cytoplasm. It carries out the reaction tRNA(Ile) + L-isoleucine + ATP = L-isoleucyl-tRNA(Ile) + AMP + diphosphate. Its function is as follows. Catalyzes the attachment of isoleucine to tRNA(Ile). As IleRS can inadvertently accommodate and process structurally similar amino acids such as valine, to avoid such errors it has two additional distinct tRNA(Ile)-dependent editing activities. One activity is designated as 'pretransfer' editing and involves the hydrolysis of activated Val-AMP. The other activity is designated 'posttransfer' editing and involves deacylation of mischarged Val-tRNA(Ile). In Colwellia psychrerythraea (strain 34H / ATCC BAA-681) (Vibrio psychroerythus), this protein is Isoleucine--tRNA ligase.